Consider the following 866-residue polypeptide: E3 ubiquitin-protein ligase RNF216 (866 aa).

Disordered regions lie at residues 46–117 (LVTP…NPRS), 131–161 (YTES…SAAL), and 211–240 (EFPG…HPLG). The segment covering 55–76 (EEEDLDDDVILTEDDSEDDYGE) has biased composition (acidic residues). Glycyl lysine isopeptide (Lys-Gly) (interchain with G-Cter in SUMO2) cross-links involve residues leucine 80, threonine 89, and lysine 100. Polar residues predominate over residues 137-156 (LETQNQSSEDSETELLSNLG). Residues lysine 351 and lysine 354 each participate in a glycyl lysine isopeptide (Lys-Gly) (interchain with G-Cter in SUMO2) cross-link. Serine 419 is modified (phosphoserine). Glycyl lysine isopeptide (Lys-Gly) (interchain with G-Cter in SUMO2) cross-links involve residues lysine 425, lysine 430, lysine 448, lysine 459, and lysine 485. The stretch at 475-491 (VQQEQEFYEQKIKEMAE) forms a coiled coil. Residues 511–728 (QLIECRCCYG…SPGAPCQECS (218 aa)) form a TRIAD supradomain region. Residues cysteine 515, cysteine 518, cysteine 537, cysteine 540, cysteine 605, and cysteine 608 each coordinate Zn(2+). The segment at 515 to 564 (CRCCYGEFPFEELTQCADAHLFCKECLIRYAQEAVFGSGKLELSCMEGSC) adopts an RING-type 1 zinc-finger fold. The segment at 583–648 (YKYYERKAEE…LWKEHNGLTC (66 aa)) adopts an IBR-type zinc-finger fold. Lysine 619 participates in a covalent cross-link: Glycyl lysine isopeptide (Lys-Gly) (interchain with G-Cter in SUMO2). The Zn(2+) site is built by cysteine 623, cysteine 628, cysteine 633, cysteine 636, histidine 643, and cysteine 648. Residues lysine 658 and lysine 666 each participate in a glycyl lysine isopeptide (Lys-Gly) (interchain with G-Cter in SUMO2) cross-link. Residues cysteine 675 and cysteine 678 each contribute to the Zn(2+) site. Residues 675 to 703 (CHKCGTGLIKSEGCNRMSCRCGAQMCYLC) form an RING-type 2; atypical zinc finger. Cysteine 688 is an active-site residue. 5 residues coordinate Zn(2+): cysteine 693, cysteine 695, cysteine 700, cysteine 703, and histidine 716. Serine 719 is modified (phosphoserine; by MAPK1). Cysteine 724 provides a ligand contact to Zn(2+). The stretch at 737-763 (TEDDEKLIEEIQKEAEEEQKRKNGENT) forms a coiled coil. Glycyl lysine isopeptide (Lys-Gly) (interchain with G-Cter in SUMO2) cross-links involve residues lysine 765 and lysine 773.

In terms of assembly, interacts with UBE2L3 and to some extent with UBE2L6. Interacts with TRAF3, TLR3, TLR4, TLR5 and TLR9. Isoform 3/ZIN binds RIPK1. As to quaternary structure, (Microbial infection) Isoform 3/ZIN binds RIPK1 and HIV Vif. In terms of processing, auto-ubiquitinated. Phosphorylation at Ser-719 enhances acceptor ubiquitin binding and chain-type specificity towards 'Lys-63' di-ubiquitin but not di-ubiquitin with other linkage types. As to expression, ubiquitous, with the highest levels of expression in testis and peripheral blood leukocytes.

The protein resides in the cytoplasm. It localises to the cytoplasmic vesicle. Its subcellular location is the clathrin-coated vesicle. It carries out the reaction S-ubiquitinyl-[E2 ubiquitin-conjugating enzyme]-L-cysteine + [acceptor protein]-L-lysine = [E2 ubiquitin-conjugating enzyme]-L-cysteine + N(6)-ubiquitinyl-[acceptor protein]-L-lysine.. The protein operates within protein modification; protein ubiquitination. Its activity is regulated as follows. Allosterically activated by 'Lys-63'-linked di-ubiquitin. Functionally, E3 ubiquitin ligase which accepts ubiquitin from specific E2 ubiquitin-conjugating enzymes, and then transfers it to substrates promoting their ubiquitination. Plays a role in the regulation of antiviral responses by promoting the degradation of TRAF3, TLR4 and TLR9. In turn, down-regulates NF-kappa-B and IRF3 activation as well as beta interferon production. Also participates in the regulation of autophagy by ubiquitinating BECN1 leading to its degradation and autophagy inhibition. Plays a role in ARC-dependent synaptic plasticity by mediating ARC ubiquitination resulting in its rapid proteasomal degradation. Plays aso an essential role in spermatogenesis and male fertility. Mechanistically, regulates meiosis by promoting the degradation of PRKACB through the ubiquitin-mediated lysosome pathway. Modulates the gonadotropin-releasing hormone signal pathway by affecting the stability of STAU2 that is required for the microtubule-dependent transport of neuronal RNA from the cell body to the dendrite. Inhibits TNF and IL-1 mediated activation of NF-kappa-B. Promotes TNF and RIP mediated apoptosis. The protein is E3 ubiquitin-protein ligase RNF216 (RNF216) of Homo sapiens (Human).